The following is a 131-amino-acid chain: Small ribosomal subunit protein uS8 (131 aa).

Belongs to the universal ribosomal protein uS8 family. Part of the 30S ribosomal subunit. Contacts proteins S5 and S12.

In terms of biological role, one of the primary rRNA binding proteins, it binds directly to 16S rRNA central domain where it helps coordinate assembly of the platform of the 30S subunit. The polypeptide is Small ribosomal subunit protein uS8 (Wolbachia sp. subsp. Brugia malayi (strain TRS)).